Consider the following 209-residue polypeptide: uncharacterized protein (209 aa).

4Fe-4S ferredoxin-type domains follow at residues 38 to 67 (KTKP…IFSF), 63 to 92 (KIFS…KDRF), 90 to 119 (DRFT…KEIP), 122 to 151 (KTPV…EINP), 145 to 174 (INKE…TPDE), and 179 to 209 (LIVK…HRES). Positions 47, 50, 53, 57, 72, 75, 78, 82, 99, 102, 105, and 109 each coordinate [4Fe-4S] cluster. [4Fe-4S] cluster is bound by residues Cys154, Cys157, Cys160, Cys164, Cys188, Cys191, Cys194, and Cys198.

This is an uncharacterized protein from Methanocaldococcus jannaschii (strain ATCC 43067 / DSM 2661 / JAL-1 / JCM 10045 / NBRC 100440) (Methanococcus jannaschii).